The sequence spans 56 residues: Prokaryotic ubiquitin-like protein UBact (56 aa).

The disordered stretch occupies residues 1 to 56; that stretch reads MPERIVKPMPQDPVTKPGDEGPRTPNVPKPDTERLLERMRRVDPRQAQRYRQRSGE. Residues 30–46 show a composition bias toward basic and acidic residues; it reads PDTERLLERMRRVDPRQ. An Isoglutamyl lysine isopeptide (Glu-Lys) (interchain with K-? in acceptor proteins) cross-link involves residue glutamate 56.

This sequence belongs to the ubiquitin-like protein UBact family.

Its function is as follows. May function as a protein modifier covalently attached to lysine residues of substrate proteins. This may serve to target the modified proteins for degradation by proteasomes. The sequence is that of Prokaryotic ubiquitin-like protein UBact from Acetithermum autotrophicum.